Consider the following 89-residue polypeptide: uncharacterized protein (89 aa).

Positions 1-19 (MIVRTLLIAAALLGGTAQA) are cleaved as a signal peptide.

The protein resides in the secreted. This is an uncharacterized protein from Pseudomonas aeruginosa (strain UCBPP-PA14).